The sequence spans 215 residues: Sec-independent protein translocase protein TatB (215 aa).

Residues 1–21 (MLDIGWTELVVIAIVLIIVVG) form a helical membrane-spanning segment. Disordered regions lie at residues 95–119 (DLQK…EPVN) and 138–215 (AVSS…KGDA). The span at 145 to 157 (QMDRAADVPKASE) shows a compositional bias: basic and acidic residues. Residues 203 to 215 (SKTRAASRKKGDA) are compositionally biased toward basic residues.

Belongs to the TatB family. In terms of assembly, the Tat system comprises two distinct complexes: a TatABC complex, containing multiple copies of TatA, TatB and TatC subunits, and a separate TatA complex, containing only TatA subunits. Substrates initially bind to the TatABC complex, which probably triggers association of the separate TatA complex to form the active translocon.

It localises to the cell inner membrane. Functionally, part of the twin-arginine translocation (Tat) system that transports large folded proteins containing a characteristic twin-arginine motif in their signal peptide across membranes. Together with TatC, TatB is part of a receptor directly interacting with Tat signal peptides. TatB may form an oligomeric binding site that transiently accommodates folded Tat precursor proteins before their translocation. This Rhizobium meliloti (strain 1021) (Ensifer meliloti) protein is Sec-independent protein translocase protein TatB.